The chain runs to 329 residues: Probable endo-beta-1,4-glucanase B (329 aa).

The first 18 residues, 1–18, serve as a signal peptide directing secretion; the sequence is MKFGSIVLIAAAAGSAVA. N-linked (GlcNAc...) asparagine glycans are attached at residues N33 and N96. E156 (proton donor) is an active-site residue. E263 acts as the Nucleophile in catalysis.

It belongs to the glycosyl hydrolase 5 (cellulase A) family.

The protein localises to the secreted. It catalyses the reaction Endohydrolysis of (1-&gt;4)-beta-D-glucosidic linkages in cellulose, lichenin and cereal beta-D-glucans.. Functionally, has endoglucanase activity on substrates containing beta-1,4 glycosidic bonds, like in carboxymethylcellulose (CMC), hydroxyethylcellulose (HEC) and beta-glucan. Involved in the degradation of complex natural cellulosic substrates. This Neosartorya fischeri (strain ATCC 1020 / DSM 3700 / CBS 544.65 / FGSC A1164 / JCM 1740 / NRRL 181 / WB 181) (Aspergillus fischerianus) protein is Probable endo-beta-1,4-glucanase B (eglB).